The following is a 198-amino-acid chain: RNA 2',3'-cyclic phosphodiesterase (198 aa).

His39 serves as the catalytic Proton donor. Short sequence motifs (HXTX) lie at residues 39-42 (HLTL) and 130-133 (HITL). The Proton acceptor role is filled by His130.

Belongs to the 2H phosphoesterase superfamily. ThpR family.

It carries out the reaction a 3'-end 2',3'-cyclophospho-ribonucleotide-RNA + H2O = a 3'-end 2'-phospho-ribonucleotide-RNA + H(+). In terms of biological role, hydrolyzes RNA 2',3'-cyclic phosphodiester to an RNA 2'-phosphomonoester. The protein is RNA 2',3'-cyclic phosphodiesterase of Thermus thermophilus (strain ATCC 27634 / DSM 579 / HB8).